The following is a 114-amino-acid chain: Hydrogenase maturation factor HypA (114 aa).

Ni(2+) is bound at residue His2. The Zn(2+) site is built by Cys73, Cys76, Cys89, and Cys92.

The protein belongs to the HypA/HybF family.

Functionally, involved in the maturation of [NiFe] hydrogenases. Required for nickel insertion into the metal center of the hydrogenase. The chain is Hydrogenase maturation factor HypA from Desulfitobacterium hafniense (strain DSM 10664 / DCB-2).